The primary structure comprises 186 residues: Membrane protein Rv1476 (186 aa).

The chain crosses the membrane as a helical span at residues 138–158; the sequence is FPWSALTIVLLIGVLAAAVGA. The segment at 166 to 186 is disordered; that stretch reads RRSATSTDAAPGAGDDLNQGV.

It localises to the membrane. Functionally, may affect the expression of genes linked to host macrophage apoptosis and immune response, thereby promoting the survival of M.tuberculosis in host macrophages. Overexpression of the gene increases susceptibility of the bacteria to various stresses, but promotes intracellular survival in host macrophages. It has no impact on the growth rate in vitro. Overexpression causes changes in the transcriptome of THP-1 cells, including expression of genes involved in cell proliferation, fatty acid degradation, cytokine-cytokine receptor interaction and immune response pathways. The protein is Membrane protein Rv1476 of Mycobacterium tuberculosis (strain ATCC 25618 / H37Rv).